A 473-amino-acid chain; its full sequence is Glutamine synthetase (473 aa).

In terms of domain architecture, GS beta-grasp spans 18 to 102 (NNIKWVDLQF…VLTKVFWGGG (85 aa)). A GS catalytic domain is found at 110–473 (PRGIAEEAEK…PMEIYQYLDS (364 aa)). Residues glutamate 133 and glutamate 135 each coordinate Mg(2+). ATP is bound at residue glutamate 207. Glutamate 212 and glutamate 220 together coordinate Mg(2+). Residues 264–265 (NG) and glycine 265 contribute to the L-glutamate site. Histidine 269 contacts Mg(2+). ATP-binding positions include 271–273 (HFS) and serine 273. L-glutamate contacts are provided by arginine 324, glutamate 330, and arginine 342. ATP-binding residues include arginine 342, arginine 347, and lysine 357. Position 362 (glutamate 362) interacts with Mg(2+). An L-glutamate-binding site is contributed by arginine 364.

This sequence belongs to the glutamine synthetase family. As to quaternary structure, oligomer of 12 subunits arranged in the form of two hexagons. Mg(2+) is required as a cofactor. Requires Mn(2+) as cofactor.

Its subcellular location is the cytoplasm. It carries out the reaction L-glutamate + NH4(+) + ATP = L-glutamine + ADP + phosphate + H(+). Strongly inhibited by glycine and L-alanine. AMP at 10 mM displays a very weak inhibitory effect. The activity of this enzyme is not controlled by adenylation. In terms of biological role, probably involved in nitrogen metabolism via ammonium assimilation. Catalyzes the ATP-dependent biosynthesis of glutamine from glutamate and ammonia. This is Glutamine synthetase from Sulfolobus acidocaldarius (strain ATCC 33909 / DSM 639 / JCM 8929 / NBRC 15157 / NCIMB 11770).